The chain runs to 428 residues: Immunoglobulin superfamily member 11 (428 aa).

The signal sequence occupies residues 1 to 22 (MTRRRSALASWLLLSLLGVAAS). The region spanning 23-136 (LEVSESPGSV…DRGGRNIGVT (114 aa)) is the Ig-like V-type domain. At 23–239 (LEVSESPGSV…LQVISPQPRS (217 aa)) the chain is on the extracellular side. 2 disulfide bridges follow: C44–C120 and C165–C215. Residue N102 is glycosylated (N-linked (GlcNAc...) asparagine). The Ig-like C2-type domain occupies 144-234 (PSAPNCQIQG…TCLLDLQVIS (91 aa)). A helical transmembrane segment spans residues 240 to 260 (VGVIAGAVGTGAVLIVICLAL). Residues 261–428 (TSGAFFYWRS…PAQSRAGSLV (168 aa)) are Cytoplasmic-facing. R375 is modified (omega-N-methylarginine).

Post-translationally, N-glycosylated.

The protein localises to the cell membrane. Functions as a cell adhesion molecule through homophilic interaction. Stimulates cell growth. In Rattus norvegicus (Rat), this protein is Immunoglobulin superfamily member 11 (Igsf11).